A 557-amino-acid chain; its full sequence is Potassium-transporting ATPase potassium-binding subunit (557 aa).

A run of 12 helical transmembrane segments spans residues 5 to 25, 63 to 83, 132 to 152, 170 to 190, 253 to 273, 283 to 303, 329 to 349, 356 to 376, 379 to 399, 416 to 436, 484 to 504, and 526 to 546; these read GFLL…PLGS, LCAI…MLLG, GLTV…FALI, LLRI…LFFI, FVQM…FGEV, LLWA…WAEV, VLVS…AVIA, ALGG…FGGV, GLYG…LMIG, LTAL…ALAM, LLAF…MAIA, and LFVG…FIPA.

It belongs to the KdpA family. As to quaternary structure, the system is composed of three essential subunits: KdpA, KdpB and KdpC.

Its subcellular location is the cell inner membrane. Part of the high-affinity ATP-driven potassium transport (or Kdp) system, which catalyzes the hydrolysis of ATP coupled with the electrogenic transport of potassium into the cytoplasm. This subunit binds the periplasmic potassium ions and delivers the ions to the membrane domain of KdpB through an intramembrane tunnel. This is Potassium-transporting ATPase potassium-binding subunit from Escherichia coli O157:H7.